Reading from the N-terminus, the 460-residue chain is Ankyrin repeat and MYND domain-containing protein 2 (460 aa).

ANK repeat units follow at residues 45–74 (HGMTPLMHAAYKGKVDMCRLLLRHGADVNC), 79–108 (HGYTALMFAGLSGNKEITWMMLEAGAETDV), and 159–188 (KLAGPLHKIITTTNMHPVKIVLLVKENPLL). 8 residues coordinate Zn(2+): Cys-320, Cys-323, Cys-332, Cys-335, Cys-341, Cys-345, His-353, and Cys-357. The MYND-type zinc-finger motif lies at 320 to 357 (CTTCGEKGADKRCSVCKVVMYCDQNCQKTHWFTHKKVC). 2 stretches are compositionally biased toward basic and acidic residues: residues 371 to 387 (AAKEKRRQEKKQKKDEA) and 425 to 436 (ELTKEPEARAPR). The disordered stretch occupies residues 371–460 (AAKEKRRQEK…ALQKIQDSEE (90 aa)).

The protein localises to the cell projection. It localises to the cilium. May be involved in the trafficking of signaling proteins to the cilia. This chain is Ankyrin repeat and MYND domain-containing protein 2 (ANKMY2), found in Gallus gallus (Chicken).